Consider the following 451-residue polypeptide: tRNA modification GTPase MnmE (451 aa).

(6S)-5-formyl-5,6,7,8-tetrahydrofolate is bound by residues arginine 28, glutamate 85, and lysine 124. One can recognise a TrmE-type G domain in the interval 220-373 (GLYTVLVGPP…LKTRLRTLLL (154 aa)). Asparagine 230 serves as a coordination point for K(+). Residues 230–235 (NVGKSS), 249–255 (TDVPGTT), and 274–277 (DTAG) each bind GTP. Serine 234 contacts Mg(2+). K(+) contacts are provided by threonine 249, valine 251, and threonine 254. Threonine 255 contacts Mg(2+). Lysine 451 is a binding site for (6S)-5-formyl-5,6,7,8-tetrahydrofolate.

This sequence belongs to the TRAFAC class TrmE-Era-EngA-EngB-Septin-like GTPase superfamily. TrmE GTPase family. In terms of assembly, homodimer. Heterotetramer of two MnmE and two MnmG subunits. The cofactor is K(+).

Its subcellular location is the cytoplasm. In terms of biological role, exhibits a very high intrinsic GTPase hydrolysis rate. Involved in the addition of a carboxymethylaminomethyl (cmnm) group at the wobble position (U34) of certain tRNAs, forming tRNA-cmnm(5)s(2)U34. This chain is tRNA modification GTPase MnmE, found in Xylella fastidiosa (strain 9a5c).